Consider the following 359-residue polypeptide: Phospho-N-acetylmuramoyl-pentapeptide-transferase (359 aa).

10 helical membrane-spanning segments follow: residues 24-44 (FRAL…SPIF), 72-92 (FVPS…SILL), 100-120 (TWIM…DDFV), 134-154 (MLGQ…VMHI), 170-190 (LGYF…NAVN), 197-217 (GLAI…SYVA), 234-254 (AGEL…FLWF), 261-281 (MFMG…LAIM), 289-309 (IIAG…VSVF), and 336-356 (KIVV…IATL).

The protein belongs to the glycosyltransferase 4 family. MraY subfamily. Requires Mg(2+) as cofactor.

The protein localises to the cell inner membrane. It catalyses the reaction UDP-N-acetyl-alpha-D-muramoyl-L-alanyl-gamma-D-glutamyl-meso-2,6-diaminopimeloyl-D-alanyl-D-alanine + di-trans,octa-cis-undecaprenyl phosphate = di-trans,octa-cis-undecaprenyl diphospho-N-acetyl-alpha-D-muramoyl-L-alanyl-D-glutamyl-meso-2,6-diaminopimeloyl-D-alanyl-D-alanine + UMP. Its pathway is cell wall biogenesis; peptidoglycan biosynthesis. Functionally, catalyzes the initial step of the lipid cycle reactions in the biosynthesis of the cell wall peptidoglycan: transfers peptidoglycan precursor phospho-MurNAc-pentapeptide from UDP-MurNAc-pentapeptide onto the lipid carrier undecaprenyl phosphate, yielding undecaprenyl-pyrophosphoryl-MurNAc-pentapeptide, known as lipid I. This chain is Phospho-N-acetylmuramoyl-pentapeptide-transferase, found in Hydrogenobaculum sp. (strain Y04AAS1).